The following is a 581-amino-acid chain: Protein GAMETOPHYTE DEFECTIVE 1 (581 aa).

Residues 452-467 are compositionally biased toward polar residues; sequence SMNIESTSEGGSMSPS. The disordered stretch occupies residues 452-512; the sequence is SMNIESTSEG…TTGHASNDEM (61 aa). Residues 496–512 show a composition bias toward basic and acidic residues; the sequence is ENSKERATTGHASNDEM.

It belongs to the eukaryotic/archaeal RNase P protein component 3 family. In terms of assembly, probable component of nuclear RNase P and RNase MRP ribonucleoproteins. Interacts with POP5. Mostly expressed in inflorescence and roots, to a lower extent in leaves, and, at low levels, in siliques, seedlings and stems.

The protein localises to the nucleus. It localises to the nucleolus. It is found in the mitochondrion. Its function is as follows. Probable component of ribonuclease P, a ribonucleoprotein complex that generates mature tRNA molecules by cleaving their 5'-ends. May also be a component of the MRP ribonuclease complex, which cleaves pre-rRNA sequences. Required for female gametophyte development and male competence. This chain is Protein GAMETOPHYTE DEFECTIVE 1, found in Arabidopsis thaliana (Mouse-ear cress).